The sequence spans 432 residues: Interleukin-11 receptor subunit alpha-1 (432 aa).

The first 23 residues, 1 to 23 (MSSSCSGLTRVLVAVATALVSSS), serve as a signal peptide directing secretion. The Extracellular segment spans residues 24–372 (SPCPQAWGPP…DPLEQVAVLA (349 aa)). In terms of domain architecture, Ig-like C2-type spans 27-110 (PQAWGPPGVQ…SGGMVTLKLG (84 aa)). 3 disulfides stabilise this stretch: Cys48-Cys94, Cys120-Cys130, and Cys170-Cys180. 2 Fibronectin type-III domains span residues 112–219 (PPAR…LRPD) and 220–317 (PPQG…TPST). N-linked (GlcNAc...) asparagine glycosylation is present at Asn127. Positions 151–170 (KTLPGAESQRESPSTGPWPC) are disordered. Asn194 carries N-linked (GlcNAc...) asparagine glycosylation. The WSXWS motif motif lies at 304–308 (WSAWS). Disordered stretches follow at residues 309-332 (PEAW…QGHG) and 342-361 (EDSP…PLDH). A helical membrane pass occupies residues 373 to 393 (SLGIFSCLGLAVGALALGLWL). Over 394–432 (RLRRSGKDGPQKPGLLAPMIPVEKLPGIPNLQRTPENFS) the chain is Cytoplasmic.

The protein belongs to the type I cytokine receptor family. Type 3 subfamily. In terms of assembly, on IL11 binding, forms a multimer complex with IL6ST/gp130. In terms of processing, a short soluble form is also released from the membrane by proteolysis. The sIL11RA is formed either by limited proteolysis of membrane-bound receptors, a process referred to as ectodomain shedding, or directly secreted from the cells after alternative mRNA splicing. mIL11RA is cleaved by the proteases ADAM10, ELANE and PRTN3. In terms of tissue distribution, widely expressed in all adult tissues and in embryos. Highest levels in kidney, skeletal muscle and embryo.

The protein resides in the membrane. The protein localises to the secreted. In terms of biological role, receptor for interleukin-11. The receptor systems for IL6, LIF, OSM, CNTF, IL11 and CT1 can utilize IL6ST for initiating signal transmission. The IL11/IL11RA/IL6ST complex may be involved in the control of proliferation and/or differentiation of skeletogenic progenitor or other mesenchymal cells. Essential for the normal development of craniofacial bones and teeth. Functionally, soluble form of IL11 receptor (sIL11RA) that acts as an agonist of IL11 activity. The IL11:sIL11RA complex binds to IL6ST/gp130 on cell surfaces and induces signaling also on cells that do not express membrane-bound IL11RA in a process called IL11 trans-signaling. The protein is Interleukin-11 receptor subunit alpha-1 of Mus musculus (Mouse).